Here is a 160-residue protein sequence, read N- to C-terminus: MSKKKANAPTSNTIALNKKAKHEYHIEERFEAGLALLGWEVKSLRAGKAQLVDAYVLLKDGEAWLLGSHITPLNTASTHVIADPTRTRKLLLHAKEIAKIVGQVNQAGYTCIPLALYWKKNKVKCEIALVKGKKLFDKRATEKERDWNRQKQRIMREANT.

The protein belongs to the SmpB family.

Its subcellular location is the cytoplasm. Its function is as follows. Required for rescue of stalled ribosomes mediated by trans-translation. Binds to transfer-messenger RNA (tmRNA), required for stable association of tmRNA with ribosomes. tmRNA and SmpB together mimic tRNA shape, replacing the anticodon stem-loop with SmpB. tmRNA is encoded by the ssrA gene; the 2 termini fold to resemble tRNA(Ala) and it encodes a 'tag peptide', a short internal open reading frame. During trans-translation Ala-aminoacylated tmRNA acts like a tRNA, entering the A-site of stalled ribosomes, displacing the stalled mRNA. The ribosome then switches to translate the ORF on the tmRNA; the nascent peptide is terminated with the 'tag peptide' encoded by the tmRNA and targeted for degradation. The ribosome is freed to recommence translation, which seems to be the essential function of trans-translation. This is SsrA-binding protein from Marinobacter nauticus (strain ATCC 700491 / DSM 11845 / VT8) (Marinobacter aquaeolei).